The following is a 71-amino-acid chain: Large ribosomal subunit protein bL31 (71 aa).

4 residues coordinate Zn(2+): Cys16, Cys18, Cys37, and Cys40.

It belongs to the bacterial ribosomal protein bL31 family. Type A subfamily. As to quaternary structure, part of the 50S ribosomal subunit. Zn(2+) is required as a cofactor.

Functionally, binds the 23S rRNA. In Serratia proteamaculans (strain 568), this protein is Large ribosomal subunit protein bL31.